Reading from the N-terminus, the 257-residue chain is Imidazole glycerol phosphate synthase subunit HisF (257 aa).

Catalysis depends on residues D11 and D130.

Belongs to the HisA/HisF family. In terms of assembly, heterodimer of HisH and HisF.

It is found in the cytoplasm. It catalyses the reaction 5-[(5-phospho-1-deoxy-D-ribulos-1-ylimino)methylamino]-1-(5-phospho-beta-D-ribosyl)imidazole-4-carboxamide + L-glutamine = D-erythro-1-(imidazol-4-yl)glycerol 3-phosphate + 5-amino-1-(5-phospho-beta-D-ribosyl)imidazole-4-carboxamide + L-glutamate + H(+). Its pathway is amino-acid biosynthesis; L-histidine biosynthesis; L-histidine from 5-phospho-alpha-D-ribose 1-diphosphate: step 5/9. Its function is as follows. IGPS catalyzes the conversion of PRFAR and glutamine to IGP, AICAR and glutamate. The HisF subunit catalyzes the cyclization activity that produces IGP and AICAR from PRFAR using the ammonia provided by the HisH subunit. The polypeptide is Imidazole glycerol phosphate synthase subunit HisF (Francisella philomiragia subsp. philomiragia (strain ATCC 25017 / CCUG 19701 / FSC 153 / O#319-036)).